A 115-amino-acid polypeptide reads, in one-letter code: Con-Ins T1B (115 aa).

The first 24 residues, 1 to 24 (MTTSFYFLLMALGLLLYVCQSSFG), serve as a signal peptide directing secretion. Residues 25 to 29 (NQHTR) constitute a propeptide that is removed on maturation. P34 is subject to 4-hydroxyproline; partial. 3 cysteine pairs are disulfide-bonded: C38–C101, C50–C114, and C100–C105. Residues 52–94 (RKRNDAGKKRGQASPLWQRGGSLSMLKARAKRNEAFHLQRAHR) constitute a propeptide, c peptide. E98 is subject to 4-carboxyglutamate. The residue at position 104 (P104) is a 4-hydroxyproline; partial. E109 carries the 4-carboxyglutamate; partial modification. C114 bears the Cysteine amide mark.

Belongs to the insulin family. Heterodimer of A and B chains; disulfide-linked. As to expression, expressed by the venom gland.

Its subcellular location is the secreted. In terms of biological role, this venom insulin, from a fish-hunting cone snail, facilitates prey capture by rapidly inducing hypoglycemic shock. It is one of the smallest known insulin found in nature and lacks the C-terminal segment of the B chain that, in human insulin, mediates engagement of the insulin receptor (INSR) and assembly of the hormone's hexameric storage form. Despite lacking this segment, it both binds and activates human insulin receptor (long isoform (HIR-B) of INSR) with a high potency (EC(50)=12.0 nM). In vivo, intraperitoneal injection of this peptide into zebrafish lowers blood glucose with a lower potency than human insulin. In addition, when applied to water, this peptide reduces overall locomotor activity of zebrafish larvae, observed as a significant decrease in the percentage of time spent swimming and movement frequency. When tested on a mouse model of diabetes, this insulin also lowers blood glucose with a 10-fold lower potency than human insulin. The chain is Con-Ins T1B from Conus tulipa (Fish-hunting cone snail).